The primary structure comprises 495 residues: Histidine--tRNA ligase (495 aa).

It belongs to the class-II aminoacyl-tRNA synthetase family. As to quaternary structure, homodimer.

The protein resides in the cytoplasm. It carries out the reaction tRNA(His) + L-histidine + ATP = L-histidyl-tRNA(His) + AMP + diphosphate + H(+). The polypeptide is Histidine--tRNA ligase (Bartonella henselae (strain ATCC 49882 / DSM 28221 / CCUG 30454 / Houston 1) (Rochalimaea henselae)).